The sequence spans 314 residues: Methionyl-tRNA formyltransferase (314 aa).

110-113 is a binding site for (6S)-5,6,7,8-tetrahydrofolate; that stretch reads SLLP.

This sequence belongs to the Fmt family.

The enzyme catalyses L-methionyl-tRNA(fMet) + (6R)-10-formyltetrahydrofolate = N-formyl-L-methionyl-tRNA(fMet) + (6S)-5,6,7,8-tetrahydrofolate + H(+). In terms of biological role, attaches a formyl group to the free amino group of methionyl-tRNA(fMet). The formyl group appears to play a dual role in the initiator identity of N-formylmethionyl-tRNA by promoting its recognition by IF2 and preventing the misappropriation of this tRNA by the elongation apparatus. The sequence is that of Methionyl-tRNA formyltransferase from Bacillus thuringiensis subsp. konkukian (strain 97-27).